A 656-amino-acid chain; its full sequence is Bifunctional protein ThiO/ThiG (656 aa).

The interval 1-395 is thiO; sequence MQTTSDVLII…HAAENSEGSK (395 aa). Residues 7–21 and 48–50 contribute to the FAD site; these read VLII…AIAV and AGM. E56 contacts glycine. V169 contributes to the FAD binding site. Glycine-binding residues include R298 and R324. 322 to 328 contributes to the FAD binding site; it reads HYRNGIL. Positions 396–656 are thiG; that stretch reads DLLEIAGRKF…ASSPLTGLVG (261 aa). Residue K498 is the Schiff-base intermediate with DXP of the active site. 1-deoxy-D-xylulose 5-phosphate-binding positions include G559, 585–586, and 607–608; these read AG and NS.

In the N-terminal section; belongs to the DAO family. ThiO subfamily. This sequence in the C-terminal section; belongs to the ThiG family. As to quaternary structure, interacts with ThiH and ThiS. FAD is required as a cofactor.

Its subcellular location is the cytoplasm. It carries out the reaction glycine + O2 + H2O = glyoxylate + H2O2 + NH4(+). It catalyses the reaction [ThiS sulfur-carrier protein]-C-terminal-Gly-aminoethanethioate + 2-iminoacetate + 1-deoxy-D-xylulose 5-phosphate = [ThiS sulfur-carrier protein]-C-terminal Gly-Gly + 2-[(2R,5Z)-2-carboxy-4-methylthiazol-5(2H)-ylidene]ethyl phosphate + 2 H2O + H(+). It functions in the pathway cofactor biosynthesis; thiamine diphosphate biosynthesis. In terms of biological role, catalyzes the FAD-dependent oxidative deamination of glycine. Is essential for thiamine biosynthesis since the oxidation of glycine catalyzed by ThiO generates the glycine imine intermediate (dehydroglycine) required for the biosynthesis of the thiazole ring of thiamine pyrophosphate. Its function is as follows. Catalyzes the rearrangement of 1-deoxy-D-xylulose 5-phosphate (DXP) to produce the thiazole phosphate moiety of thiamine. Sulfur is provided by the thiocarboxylate moiety of the carrier protein ThiS. In vitro, sulfur can be provided by H(2)S. The polypeptide is Bifunctional protein ThiO/ThiG (thiO/thiG) (Synechocystis sp. (strain ATCC 27184 / PCC 6803 / Kazusa)).